Consider the following 191-residue polypeptide: Large ribosomal subunit protein uL6 (191 aa).

The protein belongs to the universal ribosomal protein uL6 family. In terms of assembly, part of the 50S ribosomal subunit.

In terms of biological role, this protein binds to the 23S rRNA, and is important in its secondary structure. It is located near the subunit interface in the base of the L7/L12 stalk, and near the tRNA binding site of the peptidyltransferase center. This Gloeobacter violaceus (strain ATCC 29082 / PCC 7421) protein is Large ribosomal subunit protein uL6.